Here is a 393-residue protein sequence, read N- to C-terminus: Phosphopentomutase (393 aa).

Residues D13, D286, H291, D327, H328, and H339 each coordinate Mn(2+).

Belongs to the phosphopentomutase family. Requires Mn(2+) as cofactor.

It is found in the cytoplasm. The catalysed reaction is 2-deoxy-alpha-D-ribose 1-phosphate = 2-deoxy-D-ribose 5-phosphate. It carries out the reaction alpha-D-ribose 1-phosphate = D-ribose 5-phosphate. The protein operates within carbohydrate degradation; 2-deoxy-D-ribose 1-phosphate degradation; D-glyceraldehyde 3-phosphate and acetaldehyde from 2-deoxy-alpha-D-ribose 1-phosphate: step 1/2. Functionally, isomerase that catalyzes the conversion of deoxy-ribose 1-phosphate (dRib-1-P) and ribose 1-phosphate (Rib-1-P) to deoxy-ribose 5-phosphate (dRib-5-P) and ribose 5-phosphate (Rib-5-P), respectively. The polypeptide is Phosphopentomutase (Symbiobacterium thermophilum (strain DSM 24528 / JCM 14929 / IAM 14863 / T)).